The primary structure comprises 470 residues: AAA-ATPase At5g40000 (470 aa).

A signal peptide spans 1–30 (MMMMGDSFGSIGSSMASLFFLWATIQQIFP). 248–255 (GPPGTGKS) contacts ATP.

This sequence belongs to the AAA ATPase family. BCS1 subfamily. The cofactor is Mg(2+).

The catalysed reaction is ATP + H2O = ADP + phosphate + H(+). The chain is AAA-ATPase At5g40000 from Arabidopsis thaliana (Mouse-ear cress).